The primary structure comprises 181 residues: Diphosphoinositol polyphosphate phosphohydrolase NUDT4B (181 aa).

Residues R10, 18–20 (KKR), and 39–41 (SSR) contribute to the substrate site. The 128-residue stretch at 18–145 (KKRAACLCFR…VHAEYLEKLK (128 aa)) folds into the Nudix hydrolase domain. Mg(2+) contacts are provided by G50 and E66. Positions 51 to 72 (GGMEPEEEPGGAAVREVYEEAG) match the Nudix box motif. The active-site Proton acceptor is E69. E70 lines the Mg(2+) pocket. Substrate is bound by residues 90-92 (RKH), R116, and K134.

Belongs to the Nudix hydrolase family. DIPP subfamily. The cofactor is Mg(2+). Mn(2+) is required as a cofactor.

It is found in the cytoplasm. The enzyme catalyses diphospho-myo-inositol polyphosphate + H2O = myo-inositol polyphosphate + phosphate.. Its function is as follows. Cleaves a beta-phosphate from the diphosphate groups in PP-InsP5 (diphosphoinositol pentakisphosphate), PP-InsP4 and [PP]2-InsP4 (bisdiphosphoinositol tetrakisphosphate), suggesting that it may play a role in signal transduction. Also able to catalyze the hydrolysis of dinucleoside oligophosphate Ap6A, but not Ap5A. The major reaction products are ADP and p4a from Ap6A. Also able to hydrolyze 5-phosphoribose 1-diphosphate. Does not play a role in U8 snoRNA decapping activity. Binds U8 snoRNA. The sequence is that of Diphosphoinositol polyphosphate phosphohydrolase NUDT4B from Homo sapiens (Human).